The sequence spans 269 residues: Formamidopyrimidine-DNA glycosylase (269 aa).

P2 functions as the Schiff-base intermediate with DNA in the catalytic mechanism. E3 functions as the Proton donor in the catalytic mechanism. Residue K57 is the Proton donor; for beta-elimination activity of the active site. Residues H90, R109, and K150 each contribute to the DNA site. The FPG-type zinc-finger motif lies at 235 to 269; the sequence is QVYGKAGEPCPECGEAIQEQKIGQRNTFYCSYCQC. The Proton donor; for delta-elimination activity role is filled by R259.

It belongs to the FPG family. Monomer. The cofactor is Zn(2+).

It catalyses the reaction Hydrolysis of DNA containing ring-opened 7-methylguanine residues, releasing 2,6-diamino-4-hydroxy-5-(N-methyl)formamidopyrimidine.. The enzyme catalyses 2'-deoxyribonucleotide-(2'-deoxyribose 5'-phosphate)-2'-deoxyribonucleotide-DNA = a 3'-end 2'-deoxyribonucleotide-(2,3-dehydro-2,3-deoxyribose 5'-phosphate)-DNA + a 5'-end 5'-phospho-2'-deoxyribonucleoside-DNA + H(+). Its function is as follows. Involved in base excision repair of DNA damaged by oxidation or by mutagenic agents. Acts as a DNA glycosylase that recognizes and removes damaged bases. Has a preference for oxidized purines, such as 7,8-dihydro-8-oxoguanine (8-oxoG). Has AP (apurinic/apyrimidinic) lyase activity and introduces nicks in the DNA strand. Cleaves the DNA backbone by beta-delta elimination to generate a single-strand break at the site of the removed base with both 3'- and 5'-phosphates. The protein is Formamidopyrimidine-DNA glycosylase of Vibrio vulnificus (strain CMCP6).